The primary structure comprises 890 residues: Translation initiation factor IF-2 (890 aa).

The segment at 45 to 304 (LIDHLNQKNS…LQQGFQKPAQ (260 aa)) is disordered. Residues 67 to 81 (STLNIPGTGGKSKSV) show a composition bias toward polar residues. The segment covering 92 to 217 (VKRDPQEAER…RMAEENKWTD (126 aa)) has biased composition (basic and acidic residues). A compositionally biased stretch (basic residues) spans 252–266 (GRGRNAKAARPKKGN). Residues 267-280 (KHSESKADREEARA) show a composition bias toward basic and acidic residues. The region spanning 389-558 (PRAPVVTIMG…LLQAEVLELK (170 aa)) is the tr-type G domain. The tract at residues 398–405 (GHVDHGKT) is G1. 398-405 (GHVDHGKT) serves as a coordination point for GTP. The G2 stretch occupies residues 423 to 427 (GITQH). A G3 region spans residues 444–447 (DTPG). GTP is bound by residues 444-448 (DTPGH) and 498-501 (NKID). Residues 498–501 (NKID) form a G4 region. Positions 534–536 (SAK) are G5. Residue Lys808 is modified to N6-acetyllysine.

It belongs to the TRAFAC class translation factor GTPase superfamily. Classic translation factor GTPase family. IF-2 subfamily.

It is found in the cytoplasm. Functionally, one of the essential components for the initiation of protein synthesis. Protects formylmethionyl-tRNA from spontaneous hydrolysis and promotes its binding to the 30S ribosomal subunits. Also involved in the hydrolysis of GTP during the formation of the 70S ribosomal complex. This is Translation initiation factor IF-2 from Escherichia fergusonii (strain ATCC 35469 / DSM 13698 / CCUG 18766 / IAM 14443 / JCM 21226 / LMG 7866 / NBRC 102419 / NCTC 12128 / CDC 0568-73).